We begin with the raw amino-acid sequence, 506 residues long: Lysine--tRNA ligase (506 aa).

2 residues coordinate Mg(2+): glutamate 411 and glutamate 418.

This sequence belongs to the class-II aminoacyl-tRNA synthetase family. In terms of assembly, homodimer. Requires Mg(2+) as cofactor.

The protein localises to the cytoplasm. It carries out the reaction tRNA(Lys) + L-lysine + ATP = L-lysyl-tRNA(Lys) + AMP + diphosphate. This is Lysine--tRNA ligase from Thermosynechococcus vestitus (strain NIES-2133 / IAM M-273 / BP-1).